The chain runs to 141 residues: Hemoglobin subunit alpha-A (141 aa).

The Globin domain occupies 1–141 (VLSAADKTNV…VSTVLTAKYR (141 aa)). Residue His58 coordinates O2. His87 contributes to the heme b binding site.

The protein belongs to the globin family. As to quaternary structure, heterotetramer of two alpha chains and two beta chains. Red blood cells.

In terms of biological role, involved in oxygen transport from the lung to the various peripheral tissues. The chain is Hemoglobin subunit alpha-A (HBAA) from Eudynamys scolopaceus (Western koel).